The chain runs to 422 residues: Dihydroorotase (422 aa).

Zn(2+) contacts are provided by His59 and His61. Substrate-binding positions include 61-63 (HFR) and Asn93. Zn(2+) is bound by residues Asp150, His177, and His230. Asn276 contacts substrate. Zn(2+) is bound at residue Asp303. Asp303 is a catalytic residue. Residue His307 participates in substrate binding.

This sequence belongs to the metallo-dependent hydrolases superfamily. DHOase family. Class I DHOase subfamily. It depends on Zn(2+) as a cofactor.

It carries out the reaction (S)-dihydroorotate + H2O = N-carbamoyl-L-aspartate + H(+). It functions in the pathway pyrimidine metabolism; UMP biosynthesis via de novo pathway; (S)-dihydroorotate from bicarbonate: step 3/3. Functionally, catalyzes the reversible cyclization of carbamoyl aspartate to dihydroorotate. In Streptococcus pyogenes serotype M3 (strain ATCC BAA-595 / MGAS315), this protein is Dihydroorotase.